Here is a 1088-residue protein sequence, read N- to C-terminus: MLFLRLFIFTPFLILANCQARRTIKVGLLFVQNVSSLQVGIGYRTSAAAVLVTKNKIREDHVLDGFDFEFLWDFDECNEILGAGKTVDLLEVKKVDVIFGPTCSRPALISSALATYYNIPIFEWGLTSTRQLTDVKRFPTTLPFSVNSYSLAMAILGTLKQFQWTEFVFLYCNDGDDEKCESLKDDVQTVASAHEELSLAYTFRIQSKKLEDMRAAIVEIKKRGRIIVACVASGNGSKRTLMQAVALENANNSEYVYIMAETNSRGFVVEEVGGKWHYLWEGKFDDSDTFSTEDSRTSMANLLFLVDNMGMNNVVTPQYLNFSKNVIEMMKDEPFNCVEDCVGEEYSSVAKYAGQLADAFYAYAVAVNRLLTANPQAEIRNGTMILRNIGMTFEGVGGGDLTVDPDSARTSEIIMIGLNSSRLPETYGKLIINNQSVHFEQLYSDEVMDVWNGRQRPKAKPTCGFTGTQCPPDFVRDYLVIVIIIVMFLIFAVSAAVGAVFYAIRQKRKEIERQDELWHVEASHLKPISKKSKSEASQRSFASGPSTSTKLTVESRTETTRFIFYIYQVRNNEVVAANKHDFRPQLTDVERSELRQMRSLDHDNLNKFIGLCLNSQQLLSIWRYCSRGSLADVISRSSMQMDSFFMLSLIRDIANGLGFIHTSMLHFHGYLSSRSCLIDDRWQVKISDFGLNEVRGMDKLSTENMLWWAPEVLRGLEQRSKEADIYSFGIICSEVITRSSAFDLENRKEKPEEIIYQLKKGGFNAIRPSLLTDEALEINPALVHLIRDCWTEKPSERPPIDQVRSLLRGMNDGKKGNLMDHVFNMLETYASTLEEEVNERTKELVEEQKKSDVLLYRMLPKTVAEKLKAGISIEPETFELVTIFFSDVVQFTTLASKCTPLQVVQLLNDLYTIFDSIIEQNDVYKVETIGDGYLCVSGLPHRNGHDHIKHIARMSLAFLSSLAEFRVAHMPSERINLRIGINCGSVVAGVVGLTMPRYCLFGDAVNTASRMESNGKPGRIHVSSEANHLLTHVVGGFRTEERGEVIIKGKGVMNTYWLLGENDSVPVKSNMRKRENTPSMARSITPEI.

An N-terminal signal peptide occupies residues 1 to 20; the sequence is MLFLRLFIFTPFLILANCQA. The Extracellular segment spans residues 21 to 480; the sequence is RRTIKVGLLF…PPDFVRDYLV (460 aa). N-linked (GlcNAc...) asparagine glycans are attached at residues Asn-33, Asn-235, Asn-251, Asn-321, Asn-381, Asn-419, and Asn-434. The chain crosses the membrane as a helical span at residues 481–501; it reads IVIIIVMFLIFAVSAAVGAVF. Over 502 to 1088 the chain is Cytoplasmic; the sequence is YAIRQKRKEI…SMARSITPEI (587 aa). The interval 529–552 is disordered; the sequence is SKKSKSEASQRSFASGPSTSTKLT. Positions 535–552 are enriched in polar residues; sequence EASQRSFASGPSTSTKLT. The 290-residue stretch at 535 to 824 folds into the Protein kinase domain; sequence EASQRSFASG…KGNLMDHVFN (290 aa). Residues 826-854 adopt a coiled-coil conformation; sequence LETYASTLEEEVNERTKELVEEQKKSDVL. Positions 882 to 1012 constitute a Guanylate cyclase domain; it reads TIFFSDVVQF…DAVNTASRME (131 aa). Residues 1069 to 1088 form a disordered region; it reads SNMRKRENTPSMARSITPEI.

The protein belongs to the adenylyl cyclase class-4/guanylyl cyclase family. Expressed in PHA sensory neurons.

The protein localises to the cell membrane. It carries out the reaction GTP = 3',5'-cyclic GMP + diphosphate. Guanylate cyclase involved in the production of the second messenger cGMP. This chain is Receptor-type guanylate cyclase gcy-17, found in Caenorhabditis elegans.